The sequence spans 161 residues: Phosphopantetheine adenylyltransferase (161 aa).

Ser-9 lines the substrate pocket. Residues 9–10 (SF) and His-17 each bind ATP. Positions 41, 73, and 87 each coordinate substrate. ATP contacts are provided by residues 88–90 (GLR), Glu-98, and 122–128 (FSFLSSS).

The protein belongs to the bacterial CoaD family. As to quaternary structure, homohexamer. Requires Mg(2+) as cofactor.

It localises to the cytoplasm. It carries out the reaction (R)-4'-phosphopantetheine + ATP + H(+) = 3'-dephospho-CoA + diphosphate. It functions in the pathway cofactor biosynthesis; coenzyme A biosynthesis; CoA from (R)-pantothenate: step 4/5. Functionally, reversibly transfers an adenylyl group from ATP to 4'-phosphopantetheine, yielding dephospho-CoA (dPCoA) and pyrophosphate. This is Phosphopantetheine adenylyltransferase from Nocardia farcinica (strain IFM 10152).